Reading from the N-terminus, the 236-residue chain is 2-C-methyl-D-erythritol 4-phosphate cytidylyltransferase (236 aa).

Belongs to the IspD/TarI cytidylyltransferase family. IspD subfamily. As to quaternary structure, homodimer.

The catalysed reaction is 2-C-methyl-D-erythritol 4-phosphate + CTP + H(+) = 4-CDP-2-C-methyl-D-erythritol + diphosphate. Its pathway is isoprenoid biosynthesis; isopentenyl diphosphate biosynthesis via DXP pathway; isopentenyl diphosphate from 1-deoxy-D-xylulose 5-phosphate: step 2/6. Functionally, catalyzes the formation of 4-diphosphocytidyl-2-C-methyl-D-erythritol from CTP and 2-C-methyl-D-erythritol 4-phosphate (MEP). The protein is 2-C-methyl-D-erythritol 4-phosphate cytidylyltransferase of Salmonella paratyphi B (strain ATCC BAA-1250 / SPB7).